We begin with the raw amino-acid sequence, 314 residues long: tRNA dimethylallyltransferase (314 aa).

12 to 19 (GPTASGKT) provides a ligand contact to ATP. 14-19 (TASGKT) provides a ligand contact to substrate. 2 interaction with substrate tRNA regions span residues 37–40 (DSAQ) and 161–165 (QRIQR).

The protein belongs to the IPP transferase family. As to quaternary structure, monomer. The cofactor is Mg(2+).

The enzyme catalyses adenosine(37) in tRNA + dimethylallyl diphosphate = N(6)-dimethylallyladenosine(37) in tRNA + diphosphate. Catalyzes the transfer of a dimethylallyl group onto the adenine at position 37 in tRNAs that read codons beginning with uridine, leading to the formation of N6-(dimethylallyl)adenosine (i(6)A). The sequence is that of tRNA dimethylallyltransferase from Nitrosococcus oceani (strain ATCC 19707 / BCRC 17464 / JCM 30415 / NCIMB 11848 / C-107).